Consider the following 539-residue polypeptide: Phosphoenolpyruvate carboxykinase (ATP) (539 aa).

Substrate-binding residues include Arg-64, Tyr-206, and Lys-212. Residues Lys-212, His-231, and 247–255 contribute to the ATP site; that span reads GLSGTGKTT. 2 residues coordinate Mn(2+): Lys-212 and His-231. A Mn(2+)-binding site is contributed by Asp-268. ATP is bound by residues Glu-296, Arg-332, 448–449, and Thr-454; that span reads RI. Substrate is bound at residue Arg-332.

It belongs to the phosphoenolpyruvate carboxykinase (ATP) family. Monomer. It depends on Mn(2+) as a cofactor.

Its subcellular location is the cytoplasm. It catalyses the reaction oxaloacetate + ATP = phosphoenolpyruvate + ADP + CO2. The protein operates within carbohydrate biosynthesis; gluconeogenesis. Functionally, involved in the gluconeogenesis. Catalyzes the conversion of oxaloacetate (OAA) to phosphoenolpyruvate (PEP) through direct phosphoryl transfer between the nucleoside triphosphate and OAA. This chain is Phosphoenolpyruvate carboxykinase (ATP), found in Erwinia tasmaniensis (strain DSM 17950 / CFBP 7177 / CIP 109463 / NCPPB 4357 / Et1/99).